The following is a 263-amino-acid chain: Undecaprenyl-diphosphatase 2 (263 aa).

A run of 8 helical transmembrane segments spans residues 15–37 (GLTE…LLGF), 42–62 (AKVF…VIFW), 83–103 (LHII…HSAI), 106–126 (VLFG…LMIV), 142–162 (ITYK…WPGF), 183–203 (AEYT…LDLI), 216–236 (LFAT…VSFL), and 242–262 (VKLT…YFFI).

This sequence belongs to the UppP family.

It is found in the cell membrane. The catalysed reaction is di-trans,octa-cis-undecaprenyl diphosphate + H2O = di-trans,octa-cis-undecaprenyl phosphate + phosphate + H(+). Catalyzes the dephosphorylation of undecaprenyl diphosphate (UPP). Confers resistance to bacitracin. In Bacillus cereus (strain ATCC 10987 / NRS 248), this protein is Undecaprenyl-diphosphatase 2.